The chain runs to 226 residues: Thymidylate kinase (226 aa).

Residue 9–16 coordinates ATP; it reads GPEGSGKS.

It belongs to the thymidylate kinase family.

It catalyses the reaction dTMP + ATP = dTDP + ADP. Its function is as follows. Phosphorylation of dTMP to form dTDP in both de novo and salvage pathways of dTTP synthesis. This Roseiflexus sp. (strain RS-1) protein is Thymidylate kinase.